Here is a 370-residue protein sequence, read N- to C-terminus: D-alanine--D-alanine ligase (370 aa).

One can recognise an ATP-grasp domain in the interval 144–352; that stretch reads KKIFADAGIP…YGALIERLVD (209 aa). 177 to 232 provides a ligand contact to ATP; that stretch reads EEVLTYPVFVKPANLGSSVGISKATNKKELADAMTEAFLYDRRVVVEQGVVAREIE. Mg(2+) is bound by residues Asp-306, Glu-319, and Asn-321.

Belongs to the D-alanine--D-alanine ligase family. Mg(2+) serves as cofactor. Mn(2+) is required as a cofactor.

Its subcellular location is the cytoplasm. The catalysed reaction is 2 D-alanine + ATP = D-alanyl-D-alanine + ADP + phosphate + H(+). Its pathway is cell wall biogenesis; peptidoglycan biosynthesis. Cell wall formation. The sequence is that of D-alanine--D-alanine ligase from Listeria monocytogenes serotype 4b (strain F2365).